The sequence spans 349 residues: Achromobactin transport system permease protein CbrC (349 aa).

Helical transmembrane passes span 32–52 (LALLLVLAVMVASLGVGKLML), 82–102 (VLAALVGGALAVSGLILQAMI), 111–131 (ILGITSGASAAAVFYLSFLAA), 138–158 (LPLAAMIGAATAALAVYWLAW), 168–188 (VLTGVGVSALLMAATTFMLVF), 190–210 (PLTTTLSAYVWLTGSVYGASW), 216–236 (LGGWLLLIAPWLVLLARQVRV), 263–283 (VALAGAAIAWGGAMAFVGLIA), 290–310 (LVAPGFAGQAAMAFLSGAGLV), and 325–345 (DLPAGIFVSALGAPFFLYLLI).

The protein belongs to the binding-protein-dependent transport system permease family. FecCD subfamily.

It localises to the cell inner membrane. Part of the binding-protein-dependent transport system CbrABCD for uptake of the siderophore achromobactin. Probably responsible for the translocation of the substrate across the membrane. The sequence is that of Achromobactin transport system permease protein CbrC (cbrC) from Dickeya dadantii (strain 3937) (Erwinia chrysanthemi (strain 3937)).